The following is a 1427-amino-acid chain: DNA-directed RNA polymerase subunit beta' (1427 aa).

Zn(2+)-binding residues include Cys70, Cys72, Cys85, and Cys88. Mg(2+) is bound by residues Asp461, Asp463, and Asp465. Positions 838, 912, 919, and 922 each coordinate Zn(2+).

The protein belongs to the RNA polymerase beta' chain family. As to quaternary structure, the RNAP catalytic core consists of 2 alpha, 1 beta, 1 beta' and 1 omega subunit. When a sigma factor is associated with the core the holoenzyme is formed, which can initiate transcription. It depends on Mg(2+) as a cofactor. Requires Zn(2+) as cofactor.

It carries out the reaction RNA(n) + a ribonucleoside 5'-triphosphate = RNA(n+1) + diphosphate. In terms of biological role, DNA-dependent RNA polymerase catalyzes the transcription of DNA into RNA using the four ribonucleoside triphosphates as substrates. This chain is DNA-directed RNA polymerase subunit beta', found in Sorangium cellulosum (strain So ce56) (Polyangium cellulosum (strain So ce56)).